Reading from the N-terminus, the 302-residue chain is MTNMTLRKHVIYFLFFISCSLSKPSDASRGGIAIYWGQNGNEGNLSATCATGRYAYVNVAFLVKFGNGQTPELNLAGHCNPAANTCTHFGSQVKDCQSRGIKVMLSLGGGIGNYSIGSREDAKVIADYLWNNFLGGKSSSRPLGDAVLDGIDFNIELGSPQHWDDLARTLSKFSHRGRKIYLTGAPQCPFPDRLMGSALNTKRFDYVWIQFYNNPPCSYSSGNTQNLFDSWNKWTTSIAAQKFFLGLPAAPEAAGSGYIPPDVLTSQILPTLKKSRKYGGVMLWSKFWDDKNGYSSSILASV.

The first 30 residues, 1–30 (MTNMTLRKHVIYFLFFISCSLSKPSDASRG), serve as a signal peptide directing secretion. The region spanning 31-302 (GIAIYWGQNG…GYSSSILASV (272 aa)) is the GH18 domain. 2 cysteine pairs are disulfide-bonded: Cys-49-Cys-96 and Cys-79-Cys-86. Glu-156 acts as the Proton donor in catalysis. An intrachain disulfide couples Cys-188 to Cys-217.

Belongs to the glycosyl hydrolase 18 family. Chitinase class III subfamily.

The protein resides in the secreted. It localises to the extracellular space. The enzyme catalyses Random endo-hydrolysis of N-acetyl-beta-D-glucosaminide (1-&gt;4)-beta-linkages in chitin and chitodextrins.. Functionally, this protein functions as a defense against chitin containing fungal pathogens. In Arabidopsis thaliana (Mouse-ear cress), this protein is Acidic endochitinase (CHIB1).